The primary structure comprises 137 residues: Nucleoside diphosphate kinase (137 aa).

The ATP site is built by lysine 9, phenylalanine 58, arginine 86, threonine 92, arginine 103, and asparagine 113. Residue histidine 121 is the Pros-phosphohistidine intermediate of the active site.

It belongs to the NDK family. In terms of assembly, homotetramer. Mg(2+) serves as cofactor.

It localises to the cytoplasm. The catalysed reaction is a 2'-deoxyribonucleoside 5'-diphosphate + ATP = a 2'-deoxyribonucleoside 5'-triphosphate + ADP. It catalyses the reaction a ribonucleoside 5'-diphosphate + ATP = a ribonucleoside 5'-triphosphate + ADP. In terms of biological role, major role in the synthesis of nucleoside triphosphates other than ATP. The ATP gamma phosphate is transferred to the NDP beta phosphate via a ping-pong mechanism, using a phosphorylated active-site intermediate. This Streptococcus pneumoniae (strain P1031) protein is Nucleoside diphosphate kinase.